A 56-amino-acid chain; its full sequence is Trypsin inhibitor 1 (56 aa).

A signal peptide spans 1–25 (MATTMAKLITLVVLAILAFVEVSVS). A propeptide spanning residues 26-39 (GYKTSISTITIEDN) is cleaved from the precursor. The cyclopeptide (Gly-Asp) cross-link spans 40–53 (GRCTKSIPPICFPD). Residues Cys-42 and Cys-50 are joined by a disulfide bond. Positions 54 to 56 (GRP) are excised as a propeptide.

Post-translationally, this is a cyclic peptide.

Functionally, inhibits trypsin, cathepsin G, elastase, chymotrypsin and thrombin. Does not inhibit factor Xa. The sequence is that of Trypsin inhibitor 1 from Helianthus annuus (Common sunflower).